The following is a 257-amino-acid chain: Outer membrane protein YaiO (257 aa).

A signal peptide spans 1–19 (MIKRTLLAAAIFSALPAYA).

It localises to the cell outer membrane. The protein is Outer membrane protein YaiO (yaiO) of Escherichia coli (strain K12).